A 646-amino-acid chain; its full sequence is Lipoteichoic acid synthase (646 aa).

The Cytoplasmic segment spans residues 1-7 (MSLPKKK). A helical membrane pass occupies residues 8-28 (IGIFAFFLLTVFTITLKTYFS). Over 29 to 43 (YYVDFSLGVKGLVQN) the chain is Extracellular. A helical transmembrane segment spans residues 44 to 64 (LILLMNPYSLIALVLSVFLFF). The Cytoplasmic segment spans residues 65 to 68 (KGKK). Residues 69–89 (AFWFIFIGGFLLTFLLYANVV) traverse the membrane as a helical segment. At 90 to 119 (YFRFFSDFLTFSTLNQAGNVESMGGAVSAS) the chain is on the extracellular side. The helical transmembrane segment at 120–140 (FKWYDFVYFIDTIIYLAILIF) threads the bilayer. The Cytoplasmic portion of the chain corresponds to 141 to 153 (KRKWLDNRAFSKK). Residues 154–174 (FVPVVMATSVALFFLNLAFAE) traverse the membrane as a helical segment. The Extracellular portion of the chain corresponds to 175–646 (TDRPELLTRT…KSGPKGNEKK (472 aa)). Residues glutamate 255 and threonine 300 each coordinate Mn(2+). Residue threonine 300 is part of the active site. Residue histidine 416 coordinates substrate. Residues aspartate 475 and histidine 476 each contribute to the Mn(2+) site.

The protein belongs to the LTA synthase family. In terms of processing, proteolytically cleaved.

The protein localises to the cell membrane. The protein resides in the secreted. Its pathway is cell wall biogenesis; lipoteichoic acid biosynthesis. Functionally, catalyzes the polymerization of lipoteichoic acid (LTA) polyglycerol phosphate, a reaction that presumably uses phosphatidylglycerol (PG) as substrate. Is required for staphylococcal growth and cell division process. This Staphylococcus epidermidis (strain ATCC 35984 / DSM 28319 / BCRC 17069 / CCUG 31568 / BM 3577 / RP62A) protein is Lipoteichoic acid synthase (ltaS).